We begin with the raw amino-acid sequence, 185 residues long: Ribosome-recycling factor (185 aa).

Belongs to the RRF family.

The protein resides in the cytoplasm. Responsible for the release of ribosomes from messenger RNA at the termination of protein biosynthesis. May increase the efficiency of translation by recycling ribosomes from one round of translation to another. The polypeptide is Ribosome-recycling factor (Desulfatibacillum aliphaticivorans).